The following is a 338-amino-acid chain: Probable protein S-acyltransferase 1 (338 aa).

The next 2 membrane-spanning stretches (helical) occupy residues 32-52 and 68-88; these read DASS…AFSI and LTLI…FLTS. One can recognise a DHHC domain in the interval 142–192; that stretch reads KFCDTCQLYRPPRAFHCSICNNCVQRFDHHCPWVGQCIALRNYPFFVCFLS. The active-site S-palmitoyl cysteine intermediate is cysteine 172. 2 helical membrane-spanning segments follow: residues 186 to 206 and 225 to 245; these read FFVC…VFSW and ILGV…GLTV. Residues 319–338 are disordered; the sequence is FGPKDTKMSSGKSDSEARER. Positions 320-338 are enriched in basic and acidic residues; the sequence is GPKDTKMSSGKSDSEARER.

It belongs to the DHHC palmitoyltransferase family.

The protein localises to the endosome membrane. It carries out the reaction L-cysteinyl-[protein] + hexadecanoyl-CoA = S-hexadecanoyl-L-cysteinyl-[protein] + CoA. Functionally, palmitoyl acyltransferase. This Arabidopsis thaliana (Mouse-ear cress) protein is Probable protein S-acyltransferase 1 (PAT01).